The sequence spans 408 residues: UPF0761 membrane protein azo3165 (408 aa).

The next 7 membrane-spanning stretches (helical) occupy residues 29-49 (LAFT…GVFG), 92-112 (LTLI…ATIE), 131-151 (ITVS…SVVA), 172-192 (IAAA…LYYA), 197-217 (PVRL…FLLM), 220-240 (GLGL…TFAA), and 241-261 (LPIF…GALI).

This sequence belongs to the UPF0761 family.

It is found in the cell inner membrane. The chain is UPF0761 membrane protein azo3165 from Azoarcus sp. (strain BH72).